The sequence spans 158 residues: SH3 domain-binding glutamic acid-rich protein homolog (158 aa).

The span at 40–51 (TEPGKESEKELM) shows a compositional bias: basic and acidic residues. The disordered stretch occupies residues 40–74 (TEPGKESEKELMQNKSTSNGGTVSDPEPRHPLPPQ). The segment covering 52-61 (QNKSTSNGGT) has biased composition (polar residues). The SH3-binding motif lies at 67-73 (PRHPLPP). Threonine 109 bears the Phosphothreonine mark. A disordered region spans residues 118 to 158 (LKQENGDAKKEEAETEAEDKKTEAGDGDVDVKEEAAEKAEV).

It belongs to the SH3BGR family.

The chain is SH3 domain-binding glutamic acid-rich protein homolog (Sh3beta) from Drosophila melanogaster (Fruit fly).